The primary structure comprises 275 residues: Bis(5'-nucleosyl)-tetraphosphatase, symmetrical (275 aa).

Belongs to the Ap4A hydrolase family.

The enzyme catalyses P(1),P(4)-bis(5'-adenosyl) tetraphosphate + H2O = 2 ADP + 2 H(+). Functionally, hydrolyzes diadenosine 5',5'''-P1,P4-tetraphosphate to yield ADP. The chain is Bis(5'-nucleosyl)-tetraphosphatase, symmetrical from Marinomonas sp. (strain MWYL1).